Consider the following 125-residue polypeptide: Small ribosomal subunit protein bS6 (125 aa).

The tract at residues 99 to 125 (PSIMMKSVEREEARKASTEASAPAQAQ) is disordered. Residues 105-115 (SVEREEARKAS) show a composition bias toward basic and acidic residues. Polar residues predominate over residues 116–125 (TEASAPAQAQ).

Belongs to the bacterial ribosomal protein bS6 family.

In terms of biological role, binds together with bS18 to 16S ribosomal RNA. This is Small ribosomal subunit protein bS6 from Bordetella petrii (strain ATCC BAA-461 / DSM 12804 / CCUG 43448).